The sequence spans 793 residues: DnaJ homolog subfamily C member 10 (793 aa).

An N-terminal signal peptide occupies residues 1–32 (MGVWLSKDDYIRDLKRIILCFLIVYMAILVGT). Residues 35-100 (DFYSLLGVSK…DLRKKYDKYG (66 aa)) enclose the J domain. One can recognise a Thioredoxin 1 domain in the interval 130–232 (EIITLERREF…ESLVSFAMQH (103 aa)). Cys-158 and Cys-161 are disulfide-bonded. Trxb stretches follow at residues 235–350 (STVT…LPDF) and 348–463 (PDFE…PQNF). Thioredoxin domains are found at residues 454–553 (HVTT…IEDL), 557–662 (SVVS…SLRI), and 671–778 (VSTG…INEK). A disulfide bridge links Cys-480 with Cys-483. N-linked (GlcNAc...) asparagine glycosylation is present at Asn-530. 2 cysteine pairs are disulfide-bonded: Cys-588–Cys-591 and Cys-700–Cys-703. Residues 790 to 793 (KDEL) carry the Prevents secretion from ER motif.

As to quaternary structure, interacts with HSPA5 (via its J domain). Interacts with EDEM1.

Its subcellular location is the endoplasmic reticulum lumen. In terms of biological role, endoplasmic reticulum disulfide reductase involved both in the correct folding of proteins and degradation of misfolded proteins. Required for efficient folding of proteins in the endoplasmic reticulum by catalyzing the removal of non-native disulfide bonds formed during the folding of proteins, such as LDLR. Also involved in endoplasmic reticulum-associated degradation (ERAD) by reducing incorrect disulfide bonds in misfolded glycoproteins recognized by EDEM1. Interaction with HSPA5 is required its activity, not for the disulfide reductase activity, but to facilitate the release of DNAJC10 from its substrate. Promotes apoptotic signaling pathway in response to endoplasmic reticulum stress. This Pongo abelii (Sumatran orangutan) protein is DnaJ homolog subfamily C member 10 (DNAJC10).